The primary structure comprises 233 residues: C-type lectin domain-containing protein 87 (233 aa).

The N-terminal stretch at 1–19 (MRFCLLVAFILPGLFLVHA) is a signal peptide. Ser-31 carries an O-linked (Xyl...) (chondroitin sulfate) serine glycan. N-linked (GlcNAc...) asparagine glycosylation occurs at Asn-81. Residues 93 to 223 (FADSCYWIEK…CTYMLYSICE (131 aa)) form the C-type lectin domain. Intrachain disulfides connect Cys-114–Cys-222 and Cys-193–Cys-214. An N-linked (GlcNAc...) asparagine glycan is attached at Asn-225.

This Caenorhabditis elegans protein is C-type lectin domain-containing protein 87.